The sequence spans 186 residues: Elongation factor P (186 aa).

It belongs to the elongation factor P family.

It localises to the cytoplasm. The protein operates within protein biosynthesis; polypeptide chain elongation. Functionally, involved in peptide bond synthesis. Stimulates efficient translation and peptide-bond synthesis on native or reconstituted 70S ribosomes in vitro. Probably functions indirectly by altering the affinity of the ribosome for aminoacyl-tRNA, thus increasing their reactivity as acceptors for peptidyl transferase. The polypeptide is Elongation factor P (Prochlorococcus marinus (strain MIT 9215)).